A 175-amino-acid chain; its full sequence is Transcriptional activatory protein BadR (175 aa).

An HTH marR-type domain is found at 20 to 156 (ANRLFFRLYQ…TLHYLLKILD (137 aa)).

In terms of biological role, transcriptional activator of genes for the anaerobic degradation of benzoate. The chain is Transcriptional activatory protein BadR (badR) from Rhodopseudomonas palustris (strain ATCC BAA-98 / CGA009).